A 44-amino-acid chain; its full sequence is Protein PsbN (44 aa).

Residues 6-26 (FFFTIFLWCLLLSITGYSIYV) form a helical membrane-spanning segment.

It belongs to the PsbN family.

It localises to the plastid. The protein localises to the chloroplast thylakoid membrane. In terms of biological role, may play a role in photosystem I and II biogenesis. The sequence is that of Protein PsbN from Chlorella vulgaris (Green alga).